The primary structure comprises 342 residues: Nucleoid-associated protein Sputcn32_2288 (342 aa).

Belongs to the YejK family.

It localises to the cytoplasm. It is found in the nucleoid. The protein is Nucleoid-associated protein Sputcn32_2288 of Shewanella putrefaciens (strain CN-32 / ATCC BAA-453).